Here is a 463-residue protein sequence, read N- to C-terminus: RuvB-like 2 (463 aa).

Ala-2 carries the post-translational modification N-acetylalanine. Lys-9 is covalently cross-linked (Glycyl lysine isopeptide (Lys-Gly) (interchain with G-Cter in SUMO2)). Residue 77-84 (GQPGTGKT) coordinates ATP. Ser-437 is modified (phosphoserine). Glycyl lysine isopeptide (Lys-Gly) (interchain with G-Cter in SUMO2) cross-links involve residues Lys-444 and Lys-456.

The protein belongs to the RuvB family. Forms homohexameric rings. Can form a dodecamer with RUVBL1 made of two stacked hexameric rings; however, even though RUVBL1 and RUVBL2 are present in equimolar ratio, the oligomeric status of each hexamer is not known. Oligomerization may regulate binding to nucleic acids and conversely, binding to nucleic acids may affect the dodecameric assembly. Interaction of the complex with DHX34 results in conformational changes of the N-terminus of the RUVBL2 subunits, resulting in loss of nucleotide binding ability and ATP hydrolysis of the complex. Interacts with the transcriptional activation domain of MYC. Interacts with ATF2. Component of the RNA polymerase II holoenzyme complex. May also act to bridge the LEF1/TCF1-CTNNB1 complex and TBP. Component of the NuA4 histone acetyltransferase complex which contains the catalytic subunit KAT5/TIP60 and the subunits EP400, TRRAP/PAF400, BRD8/SMAP, EPC1, DMAP1/DNMAP1, RUVBL1/TIP49, RUVBL2, ING3, actin, ACTL6A/BAF53A, MORF4L1/MRG15, MORF4L2/MRGX, MRGBP, YEATS4/GAS41, VPS72/YL1 and MEAF6. The NuA4 complex interacts with MYC and the adenovirus E1A protein. RUVBL2 interacts with EP400. Component of a NuA4-related complex which contains EP400, TRRAP/PAF400, SRCAP, BRD8/SMAP, EPC1, DMAP1/DNMAP1, RUVBL1/TIP49, RUVBL2, actin, ACTL6A/BAF53A, VPS72 and YEATS4/GAS41. Interacts with NPAT. Component of the chromatin-remodeling INO80 complex; specifically part of a complex module associated with the helicase ATP-binding and the helicase C-terminal domain of INO80. Component of some MLL1/MLL complex, at least composed of the core components KMT2A/MLL1, ASH2L, HCFC1/HCF1, WDR5 and RBBP5, as well as the facultative components BACC1, CHD8, E2F6, HSP70, INO80C, KANSL1, LAS1L, MAX, MCRS1, MGA, MYST1/MOF, PELP1, PHF20, PRP31, RING2, RUVB1/TIP49A, RUVB2/TIP49B, SENP3, TAF1, TAF4, TAF6, TAF7, TAF9 and TEX10. Interacts with IGHMBP2. Interacts with TELO2. Interacts with HINT1. Component of a SWR1-like complex. Component of the R2TP complex composed at least of RUVBL1, RUVBL2, RPAP3 and PIHD1. Component of the PAQosome complex which is responsible for the biogenesis of several protein complexes and which consists of R2TP complex members RUVBL1, RUVBL2, RPAP3 and PIH1D1, URI complex members PFDN2, PFDN6, PDRG1, UXT and URI1 as well as ASDURF, POLR2E and DNAAF10/WDR92. Interacts with ITFG1. Interacts with ZMYND10. Interacts with WAC; WAC positively regulates MTOR activity by promoting the assembly of the TTT complex composed of TELO2, TTI1 and TTI2 and the RUVBL complex composed of RUVBL1 and RUVBL2 into the TTT-RUVBL complex which leads to the dimerization of the mTORC1 complex and its subsequent activation. Forms a complex with APPL1 and APPL2. Interacts with ZNHIT2 (via HIT-type zinc finger) in the presence of ATP or ADP; shows a stronger interaction in the presence of ADP. The RUVBL1/RUVBL2 complex interacts with ZNHIT1 (via HIT-type zinc finger), ZNHIT3 (via HIT-type zinc finger), ZNHIT6 (via HIT-type zinc finger) and DDX59/ZNHIT5 (via HIT-type zinc finger) in the presence of ADP. Interacts with NOPCHAP1; the interaction is direct and disrupted upon ATP binding. Interacts with SMG1.

It is found in the nucleus matrix. It localises to the nucleus. The protein resides in the nucleoplasm. The protein localises to the cytoplasm. Its subcellular location is the membrane. It is found in the dynein axonemal particle. The catalysed reaction is ATP + H2O = ADP + phosphate + H(+). Functionally, possesses single-stranded DNA-stimulated ATPase and ATP-dependent DNA helicase (5' to 3') activity; hexamerization is thought to be critical for ATP hydrolysis and adjacent subunits in the ring-like structure contribute to the ATPase activity. Component of the NuA4 histone acetyltransferase complex which is involved in transcriptional activation of select genes principally by acetylation of nucleosomal histones H4 and H2A. This modification may both alter nucleosome-DNA interactions and promote interaction of the modified histones with other proteins which positively regulate transcription. This complex may be required for the activation of transcriptional programs associated with oncogene and proto-oncogene mediated growth induction, tumor suppressor mediated growth arrest and replicative senescence, apoptosis, and DNA repair. The NuA4 complex ATPase and helicase activities seem to be, at least in part, contributed by the association of RUVBL1 and RUVBL2 with EP400. NuA4 may also play a direct role in DNA repair when recruited to sites of DNA damage. Component of a SWR1-like complex that specifically mediates the removal of histone H2A.Z/H2AZ1 from the nucleosome. Proposed core component of the chromatin remodeling INO80 complex which exhibits DNA- and nucleosome-activated ATPase activity and catalyzes ATP-dependent nucleosome sliding. Plays an essential role in oncogenic transformation by MYC and also modulates transcriptional activation by the LEF1/TCF1-CTNNB1 complex. May also inhibit the transcriptional activity of ATF2. Involved in the endoplasmic reticulum (ER)-associated degradation (ERAD) pathway where it negatively regulates expression of ER stress response genes. May play a role in regulating the composition of the U5 snRNP complex. This chain is RuvB-like 2 (RUVBL2), found in Bos taurus (Bovine).